A 674-amino-acid polypeptide reads, in one-letter code: ATP-citrate synthase subunit 1 (674 aa).

Over residues 1–10 (MPSATSTNGA) the composition is skewed to low complexity. The tract at residues 1–26 (MPSATSTNGANGNGNGNGASASPAPG) is disordered. ATP-binding positions include 261-281 (LLRY…EVGG) and 312-338 (FKTE…KNKS). Residue glutamate 278 coordinates Mg(2+). The active-site Tele-phosphohistidine intermediate is the histidine 320. A CoA-binding site is contributed by 339-349 (MREAGFYVPDT).

It belongs to the succinate/malate CoA ligase alpha subunit family. As to quaternary structure, composed of two subunits.

It localises to the cytoplasm. The catalysed reaction is oxaloacetate + acetyl-CoA + ADP + phosphate = citrate + ATP + CoA. Its function is as follows. Catalyzes the formation of cytosolic acetyl-CoA, which is mainly used for the biosynthesis of fatty acids and sterols. The sequence is that of ATP-citrate synthase subunit 1 (ACL1) from Sordaria macrospora (strain ATCC MYA-333 / DSM 997 / K(L3346) / K-hell).